A 261-amino-acid chain; its full sequence is Cytochrome c oxidase subunit 3 (261 aa).

Topologically, residues methionine 1–proline 15 are mitochondrial matrix. A helical transmembrane segment spans residues tryptophan 16–tryptophan 34. Residues phenylalanine 35–threonine 40 lie on the Mitochondrial intermembrane side of the membrane. Residues threonine 41–threonine 66 form a helical membrane-spanning segment. The Mitochondrial matrix segment spans residues phenylalanine 67–threonine 72. Residues proline 73–serine 105 traverse the membrane as a helical segment. Topologically, residues leucine 106–glutamate 128 are mitochondrial intermembrane. A helical transmembrane segment spans residues valine 129–methionine 152. Topologically, residues glutamate 153–glutamate 155 are mitochondrial matrix. A helical transmembrane segment spans residues arginine 156 to aspartate 183. Topologically, residues alanine 184–aspartate 190 are mitochondrial intermembrane. A helical transmembrane segment spans residues glycine 191–isoleucine 223. The Mitochondrial matrix segment spans residues arginine 224–histidine 232. Residues phenylalanine 233–isoleucine 256 form a helical membrane-spanning segment. Residues tyrosine 257–serine 261 are Mitochondrial intermembrane-facing.

It belongs to the cytochrome c oxidase subunit 3 family. In terms of assembly, component of the cytochrome c oxidase (complex IV, CIV), a multisubunit enzyme composed of 14 subunits. The complex is composed of a catalytic core of 3 subunits MT-CO1, MT-CO2 and MT-CO3, encoded in the mitochondrial DNA, and 11 supernumerary subunits COX4I, COX5A, COX5B, COX6A, COX6B, COX6C, COX7A, COX7B, COX7C, COX8 and NDUFA4, which are encoded in the nuclear genome. The complex exists as a monomer or a dimer and forms supercomplexes (SCs) in the inner mitochondrial membrane with NADH-ubiquinone oxidoreductase (complex I, CI) and ubiquinol-cytochrome c oxidoreductase (cytochrome b-c1 complex, complex III, CIII), resulting in different assemblies (supercomplex SCI(1)III(2)IV(1) and megacomplex MCI(2)III(2)IV(2)).

It is found in the mitochondrion inner membrane. It catalyses the reaction 4 Fe(II)-[cytochrome c] + O2 + 8 H(+)(in) = 4 Fe(III)-[cytochrome c] + 2 H2O + 4 H(+)(out). Functionally, component of the cytochrome c oxidase, the last enzyme in the mitochondrial electron transport chain which drives oxidative phosphorylation. The respiratory chain contains 3 multisubunit complexes succinate dehydrogenase (complex II, CII), ubiquinol-cytochrome c oxidoreductase (cytochrome b-c1 complex, complex III, CIII) and cytochrome c oxidase (complex IV, CIV), that cooperate to transfer electrons derived from NADH and succinate to molecular oxygen, creating an electrochemical gradient over the inner membrane that drives transmembrane transport and the ATP synthase. Cytochrome c oxidase is the component of the respiratory chain that catalyzes the reduction of oxygen to water. Electrons originating from reduced cytochrome c in the intermembrane space (IMS) are transferred via the dinuclear copper A center (CU(A)) of subunit 2 and heme A of subunit 1 to the active site in subunit 1, a binuclear center (BNC) formed by heme A3 and copper B (CU(B)). The BNC reduces molecular oxygen to 2 water molecules using 4 electrons from cytochrome c in the IMS and 4 protons from the mitochondrial matrix. The chain is Cytochrome c oxidase subunit 3 (mt-co3) from Gadus morhua (Atlantic cod).